The following is a 146-amino-acid chain: MKKILVLNGPNLNLLGTREPEQYGRDTLADVERLCQEAGAKHGVEIECRQSNHEGVLIDWIHEAGREVAAGHMLGVVMNPGAYTHTSIALHDAIKGASVPLIELHISNVHAREEFRHHSYISPAARGIIVGLGVKGYVLAIAALVP.

The active-site Proton acceptor is Y23. 3 residues coordinate substrate: N79, H85, and D92. Residue H105 is the Proton donor of the active site. Substrate is bound by residues I106 to S107 and R116.

It belongs to the type-II 3-dehydroquinase family. As to quaternary structure, homododecamer.

The catalysed reaction is 3-dehydroquinate = 3-dehydroshikimate + H2O. Its pathway is metabolic intermediate biosynthesis; chorismate biosynthesis; chorismate from D-erythrose 4-phosphate and phosphoenolpyruvate: step 3/7. Its function is as follows. Catalyzes a trans-dehydration via an enolate intermediate. This is 3-dehydroquinate dehydratase from Variovorax paradoxus (strain S110).